A 388-amino-acid polypeptide reads, in one-letter code: Dauer abnormal formation protein 25 (388 aa).

ANK repeat units follow at residues 40–69 (SGMS…DVND), 74–103 (TLYT…RMYL), and 107–137 (IGKT…DVIE). Residues C321, C324, C333, C336, C341, C345, H353, and C357 each contribute to the Zn(2+) site. The segment at 321 to 357 (CSVCGHPGAKKRCTQCKLAYCSQECQKFDWPIHKKVC) adopts an MYND-type zinc-finger fold.

Expressed in many ciliated sensory neurons.

The protein localises to the cell projection. Its subcellular location is the cilium. Functionally, may be involved in the trafficking and dendritic transport of signaling proteins, such as the receptor-type guanylate cyclases gcy-12 and daf-11, to the cilia. In ciliated sensory neurons, required for the calcium flux to the cytoplasm in response to onset and removal of a nitric oxide (NO) stimulus and is thereby required for the behavioral avoidance response to NO-producing organisms like P.aeruginosa. This Caenorhabditis elegans protein is Dauer abnormal formation protein 25 (daf-25).